A 249-amino-acid polypeptide reads, in one-letter code: 5'-nucleotidase SurE (249 aa).

Positions 8, 9, 39, and 91 each coordinate a divalent metal cation.

It belongs to the SurE nucleotidase family. A divalent metal cation serves as cofactor.

It is found in the cytoplasm. The enzyme catalyses a ribonucleoside 5'-phosphate + H2O = a ribonucleoside + phosphate. Nucleotidase that shows phosphatase activity on nucleoside 5'-monophosphates. This is 5'-nucleotidase SurE from Haemophilus influenzae (strain 86-028NP).